A 541-amino-acid polypeptide reads, in one-letter code: Cytochrome P450 monooxygenase claW (541 aa).

The chain crosses the membrane as a helical span at residues 12 to 32; it reads VINALVILFSFWAFLSLIRVI. C480 contacts heme.

The protein belongs to the cytochrome P450 family. Heme serves as cofactor.

The protein localises to the membrane. Its pathway is secondary metabolite biosynthesis; terpenoid biosynthesis. In terms of biological role, cytochrome P450 monooxygenase; part of the gene cluster that mediates the biosynthesis of clavilactone A, a meroterpenoid that features a unique benzo-fused ten-membered carbocyclic ring unit with an alpha,beta-epoxy-gamma-lactone moiety, forming an intriguing 10/5/3 tricyclic nested skeleton. Cytochrome P450 monooxygenases claO, claP, claQ, claU, and claW are close orthologs, suggesting that a redundant function or pseudogenes are present in the cla cluster. These monoxygenases are not involved in clavilactone A biosynthesis nor its modification. ClaR, ClaS and ClaT are sufficient to produce clavilactone A. The biosynthesis begins with the prenyltransferase claS that transfers geranyl pyrophosphate (GPP) to hydroquinone to produces geranylhydroquinone. The cytochrome P450 monooxygenase claR then catalyzes the diradical coupling reaction between the intramolecular hydroquinone and allyl moieties to form the benzo-fused ten-membered carbocyclic ring unit of wigantol. Finally the cytochrome P450 monooxygenase claT exquisitely and stereoselectively assembles the alpha,beta-epoxy-gamma-lactone moiety, producing clavilactone A via arnebinol A. In Ampulloclitocybe clavipes (Club foot), this protein is Cytochrome P450 monooxygenase claW.